We begin with the raw amino-acid sequence, 343 residues long: ATP-dependent (S)-NAD(P)H-hydrate dehydratase (343 aa).

Residues 1–42 (MAVHACGAAAAVVALLSAAIALQWSPLYAVLQRALSLHTAHA) constitute a mitochondrion transit peptide. The YjeF C-terminal domain maps to 49–340 (LFQLVRNIVP…TEVGTAFSRL (292 aa)). Lysine 63 is modified (N6-acetyllysine). Tyrosine 81 is modified (phosphotyrosine). (6S)-NADPHX is bound by residues glycine 149 and 202-208 (NHVEFSR). Serine 216 is modified (phosphoserine). Residues 242 to 246 (KGEQD) and 261 to 270 (GSSRRCGGQG) contribute to the ATP site. Residue aspartate 271 coordinates (6S)-NADPHX.

It belongs to the NnrD/CARKD family. The cofactor is Mg(2+).

It localises to the mitochondrion. The catalysed reaction is (6S)-NADHX + ATP = ADP + phosphate + NADH + H(+). It catalyses the reaction (6S)-NADPHX + ATP = ADP + phosphate + NADPH + H(+). Its function is as follows. Catalyzes the dehydration of the S-form of NAD(P)HX at the expense of ATP, which is converted to ADP. Together with NAD(P)HX epimerase, which catalyzes the epimerization of the S- and R-forms, the enzyme allows the repair of both epimers of NAD(P)HX, a damaged form of NAD(P)H that is a result of enzymatic or heat-dependent hydration. The protein is ATP-dependent (S)-NAD(P)H-hydrate dehydratase of Mus musculus (Mouse).